Here is a 337-residue protein sequence, read N- to C-terminus: tRNA N6-adenosine threonylcarbamoyltransferase (337 aa).

The Fe cation site is built by His-111 and His-115. Substrate is bound by residues 134–138 (LVSGG), Asp-167, Gly-180, and Asn-272. Residue Asp-300 participates in Fe cation binding.

It belongs to the KAE1 / TsaD family. The cofactor is Fe(2+).

It is found in the cytoplasm. The enzyme catalyses L-threonylcarbamoyladenylate + adenosine(37) in tRNA = N(6)-L-threonylcarbamoyladenosine(37) in tRNA + AMP + H(+). Functionally, required for the formation of a threonylcarbamoyl group on adenosine at position 37 (t(6)A37) in tRNAs that read codons beginning with adenine. Is involved in the transfer of the threonylcarbamoyl moiety of threonylcarbamoyl-AMP (TC-AMP) to the N6 group of A37, together with TsaE and TsaB. TsaD likely plays a direct catalytic role in this reaction. The protein is tRNA N6-adenosine threonylcarbamoyltransferase of Klebsiella pneumoniae (strain 342).